The chain runs to 740 residues: ATP-dependent RNA helicase DDX1 (740 aa).

Residues 1–295 (MAAFSEMGVM…APKALIVEPS (295 aa)) form a necessary for interaction with HNRNPK region. The segment at 1-448 (MAAFSEMGVM…DTVHHVVVPV (448 aa)) is interaction with dsRNA. Residues 1 to 525 (MAAFSEMGVM…KIDCDNLEQY (525 aa)) form a necessary for interaction with RELA region. Positions 2–428 (AAFSEMGVMP…SEKIMHFPTW (427 aa)) constitute a Helicase ATP-binding domain. 46–53 (AETGSGKT) provides a ligand contact to ATP. The 178-residue stretch at 70-247 (DQQEGKKGKA…LKFNFGEEEF (178 aa)) folds into the B30.2/SPRY domain. N6-acetyllysine occurs at positions 239 and 268. At Lys281 the chain carries N6-acetyllysine; alternate. Residue Lys281 forms a Glycyl lysine isopeptide (Lys-Gly) (interchain with G-Cter in SUMO2); alternate linkage. The short motif at 370-373 (DEAD) is the DEAD box element. Ser481 bears the Phosphoserine mark. Residues 493–681 (KGEYAVRAIK…QVEPDIKVPV (189 aa)) enclose the Helicase C-terminal domain. The tract at residues 525–740 (YFMQQGGGPD…YLPNQLFRTF (216 aa)) is necessary for interaction with HNRNPK.

It belongs to the DEAD box helicase family. DDX1 subfamily. As to quaternary structure, found in a multi-helicase-TICAM1 complex at least composed of DHX36, DDX1, DDX21 and TICAM1; this complex exists in resting cells with or without poly(I:C) RNA ligand stimulation. Interacts with DHX36. Interacts (via B30.2/SPRY domain) with DDX21 (via N-terminus); this interaction serves as bridges to TICAM1. Interacts with FAM98A (via N- and C-terminus). Interacts with PHF5A (via C-terminus). Interacts with MBNL1. Interacts with CSTF2. Interacts with HNRNPK. Interacts with ATM. Interacts with RELA (via C-terminus). Component of the tRNA-splicing ligase complex. Interacts with PQBP1. Interacts with ERCC6. Phosphorylated by ATM kinase; phosphorylation is increased in response to ionizing radiation (IR).

It localises to the nucleus. The protein resides in the cytoplasm. It is found in the cytoplasmic granule. Its subcellular location is the cytosol. The protein localises to the mitochondrion. The catalysed reaction is ATP + H2O = ADP + phosphate + H(+). In terms of biological role, acts as an ATP-dependent RNA helicase, able to unwind both RNA-RNA and RNA-DNA duplexes. Possesses 5' single-stranded RNA overhang nuclease activity. Possesses ATPase activity on various RNA, but not DNA polynucleotides. May play a role in RNA clearance at DNA double-strand breaks (DSBs), thereby facilitating the template-guided repair of transcriptionally active regions of the genome. Together with RELA, acts as a coactivator to enhance NF-kappa-B-mediated transcriptional activation. Acts as a positive transcriptional regulator of cyclin CCND2 expression. Binds to the cyclin CCND2 promoter region. Associates with chromatin at the NF-kappa-B promoter region via association with RELA. Binds to poly(A) RNA. May be involved in 3'-end cleavage and polyadenylation of pre-mRNAs. Component of the tRNA-splicing ligase complex required to facilitate the enzymatic turnover of catalytic subunit RTCB: together with archease (ZBTB8OS), acts by facilitating the guanylylation of RTCB, a key intermediate step in tRNA ligation. Component of a multi-helicase-TICAM1 complex that acts as a cytoplasmic sensor of viral double-stranded RNA (dsRNA) and plays a role in the activation of a cascade of antiviral responses including the induction of pro-inflammatory cytokines via the adapter molecule TICAM1. Specifically binds (via helicase ATP-binding domain) on both short and long poly(I:C) dsRNA. This chain is ATP-dependent RNA helicase DDX1 (DDX1), found in Bos taurus (Bovine).